Here is a 395-residue protein sequence, read N- to C-terminus: Acetate kinase (395 aa).

Asn8 serves as a coordination point for Mg(2+). Residue Lys15 coordinates ATP. Arg94 is a binding site for substrate. Asp151 acts as the Proton donor/acceptor in catalysis. ATP-binding positions include 210–214, 284–286, and 329–333; these read HLGNG, DMR, and GIGEN. Position 382 (Glu382) interacts with Mg(2+).

This sequence belongs to the acetokinase family. As to quaternary structure, homodimer. Mg(2+) is required as a cofactor. Requires Mn(2+) as cofactor.

The protein resides in the cytoplasm. The enzyme catalyses acetate + ATP = acetyl phosphate + ADP. It functions in the pathway metabolic intermediate biosynthesis; acetyl-CoA biosynthesis; acetyl-CoA from acetate: step 1/2. In terms of biological role, catalyzes the formation of acetyl phosphate from acetate and ATP. Can also catalyze the reverse reaction. The polypeptide is Acetate kinase (Protochlamydia amoebophila (strain UWE25)).